A 238-amino-acid polypeptide reads, in one-letter code: Large ribosomal subunit protein uL1 (238 aa).

The protein belongs to the universal ribosomal protein uL1 family. Part of the 50S ribosomal subunit.

Its function is as follows. Binds directly to 23S rRNA. The L1 stalk is quite mobile in the ribosome, and is involved in E site tRNA release. In terms of biological role, protein L1 is also a translational repressor protein, it controls the translation of the L11 operon by binding to its mRNA. The chain is Large ribosomal subunit protein uL1 from Rickettsia prowazekii (strain Madrid E).